Here is a 544-residue protein sequence, read N- to C-terminus: Lysophosphatidylcholine acyltransferase 2 (544 aa).

Topologically, residues 1–57 (MSRCAQAAEVAATVPGAGVGNVGLRPPMVPRQASFFPPPVPNPFVQQTQIGSARRVQ) are cytoplasmic. Residues 58 to 78 (IVLLGIILLPIRVLLVALILL) form a helical; Signal-anchor for type II membrane protein membrane-spanning segment. Topologically, residues 79–544 (LAWPFAAIST…EESTSDKKDD (466 aa)) are lumenal. The short motif at 146-151 (HSTFFD) is the HXXXXD motif element. The EGTC motif signature appears at 220–223 (EGTC). 2 EF-hand domains span residues 391 to 426 (PVSD…LCNP) and 428 to 463 (NTEE…SLGV). Ca(2+)-binding residues include aspartate 404, asparagine 406, aspartate 408, serine 410, glutamate 415, aspartate 441, aspartate 443, aspartate 445, tyrosine 447, and glutamate 452. A compositionally biased stretch (polar residues) spans 518–529 (VQTTPSTASNKV). The tract at residues 518–544 (VQTTPSTASNKVSPEKHEESTSDKKDD) is disordered. Over residues 530–544 (SPEKHEESTSDKKDD) the composition is skewed to basic and acidic residues.

The protein belongs to the 1-acyl-sn-glycerol-3-phosphate acyltransferase family.

It is found in the endoplasmic reticulum membrane. The protein resides in the golgi apparatus membrane. Its subcellular location is the cell membrane. It localises to the lipid droplet. The catalysed reaction is a 1-acyl-sn-glycero-3-phosphocholine + an acyl-CoA = a 1,2-diacyl-sn-glycero-3-phosphocholine + CoA. It catalyses the reaction a 1-O-alkyl-sn-glycero-3-phosphocholine + acetyl-CoA = a 1-O-alkyl-2-acetyl-sn-glycero-3-phosphocholine + CoA. The enzyme catalyses a 1-acyl-sn-glycero-3-phosphate + an acyl-CoA = a 1,2-diacyl-sn-glycero-3-phosphate + CoA. It carries out the reaction a 1-O-(1Z-alkenyl)-sn-glycero-3-phosphocholine + an acyl-CoA = a 1-O-(1Z-alkenyl)-2-acyl-sn-glycero-3-phosphocholine + CoA. The catalysed reaction is 1-hexadecanoyl-sn-glycero-3-phosphate + (9Z)-octadecenoyl-CoA = 1-hexadecanoyl-2-(9Z-octadecenoyl)-sn-glycero-3-phosphate + CoA. It catalyses the reaction 1-(9Z-octadecenoyl)-sn-glycero-3-phosphate + (9Z)-octadecenoyl-CoA = 1,2-di-(9Z-octadecenoyl)-sn-glycero-3-phosphate + CoA. The enzyme catalyses 1-(9Z-octadecenoyl)-sn-glycero-3-phosphate + hexadecanoyl-CoA = 1-(9Z)-octadecenoyl-2-hexadecanoyl-sn-glycero-3-phosphate + CoA. It carries out the reaction 1-heptadecanoyl-sn-glycero-3-phosphate + (9Z)-octadecenoyl-CoA = 1-heptadecanoyl-2-(9Z)-octadecenoyl-sn-glycero-3-phosphate + CoA. The catalysed reaction is 1-octadecanoyl-sn-glycero-3-phosphate + (9Z)-octadecenoyl-CoA = 1-octadecanoyl-2-(9Z-octadecenoyl)-sn-glycero-3-phosphate + CoA. It catalyses the reaction heptadecanoyl-CoA + 1-(9Z-octadecenoyl)-sn-glycero-3-phosphate = 1-(9Z)-octadecenoyl-2-heptadecanoyl-sn-glycero-3-phosphate + CoA. The enzyme catalyses 1-(9Z-octadecenoyl)-sn-glycero-3-phosphate + (9Z,12Z)-octadecadienoyl-CoA = 1-(9Z)-octadecenoyl-2-(9Z,12Z)-octadecadienoyl-sn-glycero-3-phosphate + CoA. It carries out the reaction 1-(9Z-octadecenoyl)-sn-glycero-3-phosphate + tetradecanoyl-CoA = 1-(9Z)-octadecenoyl-2-tetradecanoyl-sn-glycero-3-phosphate + CoA. The catalysed reaction is pentadecanoyl-CoA + 1-(9Z-octadecenoyl)-sn-glycero-3-phosphate = 1-(9Z)-octadecenoyl-2-pentadecanoyl-sn-glycero-3-phosphate + CoA. It catalyses the reaction nonadecanoyl-CoA + 1-(9Z-octadecenoyl)-sn-glycero-3-phosphate = 1-(9Z)-octadecenoyl-2-nonadecanoyl-sn-glycero-3-phosphate + CoA. The enzyme catalyses 1-hexadecanoyl-sn-glycero-3-phosphocholine + (9Z)-octadecenoyl-CoA = 1-hexadecanoyl-2-(9Z-octadecenoyl)-sn-glycero-3-phosphocholine + CoA. It carries out the reaction 1-O-hexadecyl-sn-glycero-3-phosphocholine + acetyl-CoA = 1-O-hexadecyl-2-acetyl-sn-glycero-3-phosphocholine + CoA. The catalysed reaction is 1-O-octadecyl-sn-glycero-3-phosphocholine + acetyl-CoA = 1-O-octadecyl-2-acetyl-sn-glycero-3-phosphocholine + CoA. It catalyses the reaction 1-hexadecanoyl-sn-glycero-3-phosphocholine + acetyl-CoA = 1-hexadecanoyl-2-acetyl-sn-glycero-3-phosphocholine + CoA. The enzyme catalyses 1-octadecanoyl-sn-glycero-3-phosphocholine + acetyl-CoA = 1-octadecanoyl-2-acetyl-sn-glycero-3-phosphocholine + CoA. It carries out the reaction a 1-O-(1Z-alkenyl)-sn-glycero-3-phosphocholine + acetyl-CoA = 1-O-(1Z)-alkenyl-2-acetyl-sn-glycero-3-phosphocholine + CoA. The catalysed reaction is 1-O-octadecyl-sn-glycero-3-phosphocholine + (5Z,8Z,11Z,14Z)-eicosatetraenoyl-CoA = 1-O-octadecyl-2-(5Z,8Z,11Z,14Z)-eicosatetraenoyl-sn-glycero-3-phosphocholine + CoA. The protein operates within lipid metabolism; phospholipid metabolism. Exhibits both acyltransferase and acetyltransferase activities. Catalyzes the conversion of lysophosphatidylcholine (1-acyl-sn-glycero-3-phosphocholine or LPC) into phosphatidylcholine (1,2-diacyl-sn-glycero-3-phosphocholine or PC). Catalyzes the conversion 1-acyl-sn-glycerol-3-phosphate (lysophosphatidic acid or LPA) into 1,2-diacyl-sn-glycerol-3-phosphate (phosphatidic acid or PA) by incorporating an acyl moiety at the sn-2 position of the glycerol backbone. Involved in platelet-activating factor (PAF) biosynthesis by catalyzing the conversion of the PAF precursor, 1-O-alkyl-sn-glycero-3-phosphocholine (lyso-PAF) into 1-O-alkyl-2-acetyl-sn-glycero-3-phosphocholine (PAF). Also converts lyso-PAF to 1-O-alkyl-2-acyl-sn-glycero-3-phosphocholine (PC), a major component of cell membranes and a PAF precursor. Under resting conditions, acyltransferase activity is preferred. Upon acute inflammatory stimulus, acetyltransferase activity is enhanced and PAF synthesis increases. Involved in the regulation of lipid droplet number and size. This Homo sapiens (Human) protein is Lysophosphatidylcholine acyltransferase 2 (LPCAT2).